The primary structure comprises 663 residues: Ras and EF-hand domain-containing protein (663 aa).

EF-hand domains are found at residues Met-1–Leu-33 and Val-35–Ala-70. Positions 14, 16, 18, 20, 25, 48, 50, 52, 54, and 59 each coordinate Ca(2+). Positions Glu-122–Ser-297 form a coiled coil. Positions Ser-324–Pro-336 are enriched in polar residues. The segment at Ser-324 to Arg-343 is disordered. GTP-binding positions include Gly-477 to Ser-482, Asn-580 to Asp-583, and Ala-615 to Lys-616.

Belongs to the small GTPase superfamily. Rab family. Homodimer.

The protein localises to the cytoplasm. The protein resides in the perinuclear region. Functionally, binds predominantly GDP, and also GTP. This is Ras and EF-hand domain-containing protein (rasef) from Danio rerio (Zebrafish).